A 689-amino-acid chain; its full sequence is Glycine--tRNA ligase beta subunit (689 aa).

Belongs to the class-II aminoacyl-tRNA synthetase family. Tetramer of two alpha and two beta subunits.

The protein resides in the cytoplasm. The catalysed reaction is tRNA(Gly) + glycine + ATP = glycyl-tRNA(Gly) + AMP + diphosphate. The chain is Glycine--tRNA ligase beta subunit from Glaesserella parasuis serovar 5 (strain SH0165) (Haemophilus parasuis).